The chain runs to 119 residues: MSQIDKAARRQKIKARSRATVHGNATRPRLCVYRSLSQIYAQLIDDESGKTLMAVSTMSKDNAGLQGSKSERSAAVGKQLAEKAIAQGISNVVFDRNGFRYHGRIKALADGAREAGLIF.

The segment at 1–20 is disordered; the sequence is MSQIDKAARRQKIKARSRAT. Positions 9–19 are enriched in basic residues; sequence RRQKIKARSRA.

It belongs to the universal ribosomal protein uL18 family. Part of the 50S ribosomal subunit; part of the 5S rRNA/L5/L18/L25 subcomplex. Contacts the 5S and 23S rRNAs.

Its function is as follows. This is one of the proteins that bind and probably mediate the attachment of the 5S RNA into the large ribosomal subunit, where it forms part of the central protuberance. This is Large ribosomal subunit protein uL18 from Chlorobaculum parvum (strain DSM 263 / NCIMB 8327) (Chlorobium vibrioforme subsp. thiosulfatophilum).